The sequence spans 399 residues: Argininosuccinate synthase (399 aa).

9 to 17 provides a ligand contact to ATP; sequence AYSGGLDTS. Tyrosine 87 contributes to the L-citrulline binding site. Position 117 (glycine 117) interacts with ATP. Threonine 119, asparagine 123, and aspartate 124 together coordinate L-aspartate. Asparagine 123 contacts L-citrulline. Residues arginine 127, serine 176, serine 185, glutamate 261, and tyrosine 273 each contribute to the L-citrulline site.

Belongs to the argininosuccinate synthase family. Type 1 subfamily. Homotetramer.

It localises to the cytoplasm. The catalysed reaction is L-citrulline + L-aspartate + ATP = 2-(N(omega)-L-arginino)succinate + AMP + diphosphate + H(+). It participates in amino-acid biosynthesis; L-arginine biosynthesis; L-arginine from L-ornithine and carbamoyl phosphate: step 2/3. This chain is Argininosuccinate synthase, found in Chlorobium chlorochromatii (strain CaD3).